The following is a 376-amino-acid chain: Heat stress transcription factor A-2a (376 aa).

A disordered region spans residues 137 to 168 (LKTIKRRRPPPSSPPSSSSSSSSSQHQQQPAA). Positions 151–160 (PSSSSSSSSS) are enriched in low complexity. Positions 182–229 (VNRLQRDKSVLIAEVVKLRQEQQTTRAQMQAMEERISAAEQKQQQMTV) form a coiled coil. A hydrophobic repeat HR-A/B region spans residues 185–235 (LQRDKSVLIAEVVKLRQEQQTTRAQMQAMEERISAAEQKQQQMTVFLARAM). Residues 265–269 (KKRRR) carry the Nuclear localization signal motif. Disordered regions lie at residues 296-319 (VAEP…DTES) and 332-362 (KQRE…DDDD). Over residues 307–316 (GDGGGGGGGD) the composition is skewed to gly residues. Positions 318–325 (ESFWMQLL) match the AHA motif. The segment covering 352–362 (VDNDEEDDDDD) has biased composition (acidic residues). The short motif at 366 to 373 (LVQSIYHL) is the Nuclear export signal element.

Belongs to the HSF family. Class A subfamily. As to quaternary structure, homotrimer. Exhibits temperature-dependent phosphorylation.

It is found in the cytoplasm. It localises to the nucleus. Functionally, transcriptional regulator that specifically binds DNA of heat shock promoter elements (HSE). The protein is Heat stress transcription factor A-2a (HSFA2A) of Oryza sativa subsp. japonica (Rice).